A 288-amino-acid polypeptide reads, in one-letter code: Probable HTH-type transcriptional regulator STM3175 (288 aa).

The 100-residue stretch at 14–113 (RRVCDHIERH…GQSPRRFRQS (100 aa)) folds into the HTH araC/xylS-type domain. 2 consecutive DNA-binding regions (H-T-H motif) follow at residues 31-52 (EALS…TTWS) and 80-103 (VIDI…KTAF). Residues 111 to 288 (RQSPDWLAWH…LLTDIYLPLR (178 aa)) are putative effector binding domain; binds the peptide antibiotic albicidin.

As to quaternary structure, homodimer.

Functionally, probable transcription factor. The protein is Probable HTH-type transcriptional regulator STM3175 of Salmonella typhimurium (strain LT2 / SGSC1412 / ATCC 700720).